Here is a 154-residue protein sequence, read N- to C-terminus: 6,7-dimethyl-8-ribityllumazine synthase (154 aa).

5-amino-6-(D-ribitylamino)uracil-binding positions include F22, 56–58 (AFE), and 80–82 (TVI). A (2S)-2-hydroxy-3-oxobutyl phosphate-binding site is contributed by 85 to 86 (ST). The active-site Proton donor is H88. A 5-amino-6-(D-ribitylamino)uracil-binding site is contributed by F113. R127 contacts (2S)-2-hydroxy-3-oxobutyl phosphate.

The protein belongs to the DMRL synthase family.

The catalysed reaction is (2S)-2-hydroxy-3-oxobutyl phosphate + 5-amino-6-(D-ribitylamino)uracil = 6,7-dimethyl-8-(1-D-ribityl)lumazine + phosphate + 2 H2O + H(+). The protein operates within cofactor biosynthesis; riboflavin biosynthesis; riboflavin from 2-hydroxy-3-oxobutyl phosphate and 5-amino-6-(D-ribitylamino)uracil: step 1/2. In terms of biological role, catalyzes the formation of 6,7-dimethyl-8-ribityllumazine by condensation of 5-amino-6-(D-ribitylamino)uracil with 3,4-dihydroxy-2-butanone 4-phosphate. This is the penultimate step in the biosynthesis of riboflavin. The protein is 6,7-dimethyl-8-ribityllumazine synthase of Lactococcus lactis subsp. cremoris (strain MG1363).